The following is a 310-amino-acid chain: GTP-binding protein GTR1 (310 aa).

Residues S15, G18, K19, S20, S21, T35, T41, G64, H126, D129, and I166 each contribute to the GTP site.

The protein belongs to the GTR/RAG GTP-binding protein family. In terms of assembly, heterodimer; with GTR2. Component of the GSE complex composed of GTR1, GTR2, SLM4, MEH1 and LTV1. Interacts with GTR2; the interaction is direct. Interacts with TOR1.

Its subcellular location is the vacuole membrane. The enzyme catalyses GTP + H2O = GDP + phosphate + H(+). Functionally, GTPase involved in activation of the TORC1 signaling pathway, which promotes growth and represses autophagy in nutrient-rich conditions. Also required for TORC1 inactivation during nitrogen starvation. Required for intracellular sorting of GAP1 out of the endosome. Functionally associated with the inorganic phosphate transporter PHO84, and may be involved in regulating its function or localization. The polypeptide is GTP-binding protein GTR1 (GTR1) (Saccharomyces cerevisiae (strain ATCC 204508 / S288c) (Baker's yeast)).